Here is a 455-residue protein sequence, read N- to C-terminus: Bifunctional protein GlmU (455 aa).

Residues 1–226 form a pyrophosphorylase region; that stretch reads MSLDIVILAA…PMEVQGANDR (226 aa). UDP-N-acetyl-alpha-D-glucosamine-binding positions include 8–11, lysine 22, glutamine 73, 78–79, 99–101, glycine 136, glutamate 151, asparagine 166, and asparagine 224; these read LAAG, GT, and YGD. Aspartate 101 is a binding site for Mg(2+). Asparagine 224 serves as a coordination point for Mg(2+). Residues 227-247 are linker; that stretch reads RQLSELERHYQLREGRRLMAQ. The interval 248–455 is N-acetyltransferase; that stretch reads GVTLRDPARF…WKRPEKIKKS (208 aa). Residues arginine 330 and lysine 348 each coordinate UDP-N-acetyl-alpha-D-glucosamine. The Proton acceptor role is filled by histidine 360. Tyrosine 363 and asparagine 374 together coordinate UDP-N-acetyl-alpha-D-glucosamine. Residues alanine 377, 383 to 384, serine 402, alanine 420, and arginine 437 contribute to the acetyl-CoA site; that span reads NY.

The protein in the N-terminal section; belongs to the N-acetylglucosamine-1-phosphate uridyltransferase family. This sequence in the C-terminal section; belongs to the transferase hexapeptide repeat family. In terms of assembly, homotrimer. Mg(2+) serves as cofactor.

The protein resides in the cytoplasm. The catalysed reaction is alpha-D-glucosamine 1-phosphate + acetyl-CoA = N-acetyl-alpha-D-glucosamine 1-phosphate + CoA + H(+). The enzyme catalyses N-acetyl-alpha-D-glucosamine 1-phosphate + UTP + H(+) = UDP-N-acetyl-alpha-D-glucosamine + diphosphate. It participates in nucleotide-sugar biosynthesis; UDP-N-acetyl-alpha-D-glucosamine biosynthesis; N-acetyl-alpha-D-glucosamine 1-phosphate from alpha-D-glucosamine 6-phosphate (route II): step 2/2. It functions in the pathway nucleotide-sugar biosynthesis; UDP-N-acetyl-alpha-D-glucosamine biosynthesis; UDP-N-acetyl-alpha-D-glucosamine from N-acetyl-alpha-D-glucosamine 1-phosphate: step 1/1. The protein operates within bacterial outer membrane biogenesis; LPS lipid A biosynthesis. Catalyzes the last two sequential reactions in the de novo biosynthetic pathway for UDP-N-acetylglucosamine (UDP-GlcNAc). The C-terminal domain catalyzes the transfer of acetyl group from acetyl coenzyme A to glucosamine-1-phosphate (GlcN-1-P) to produce N-acetylglucosamine-1-phosphate (GlcNAc-1-P), which is converted into UDP-GlcNAc by the transfer of uridine 5-monophosphate (from uridine 5-triphosphate), a reaction catalyzed by the N-terminal domain. This is Bifunctional protein GlmU from Pseudomonas entomophila (strain L48).